The following is a 426-amino-acid chain: MLENYGAVASLAAFPFPKPALISQLERGETPWCSVPRGALDGEAPRGISSGYPFLKPAGISHPEQVEEPLNLKLQGEGPSLICPEGVLKRKKEDFILKEEIIEEAQDLMVLSSGPQWCGSQELWFGKTCEEKSRLGRWPGYLNGGRMESSTNDIIEVIVKDEMISVEESSGNTDVNNLLGIHHKILNEQIFYICEECGKCFDQNEDFDQHQKTHNGEKVYGCKECGKAFSFRSHCIAHQRIHSGVKPYECQECAKAFVWKSNLIRHQRIHTGEKPFECKECGKGFSQNTSLTQHQRIHTGEKPYTCKECGKSFTRNPALLRHQRMHTGEKPYECKDCGKGFMWNSDLSQHQRVHTGDKPHECTDCGKSFFCKAHLIRHQRIHTGERPYKCNDCGKAFSQNSVLIKHQRRHARDKPYNCQISHLLEH.

In terms of domain architecture, KRAB spans 1–44 (MLENYGAVASLAAFPFPKPALISQLERGETPWCSVPRGALDGEA). 8 C2H2-type zinc fingers span residues 192-214 (YICE…QKTH), 220-242 (YGCK…QRIH), 248-270 (YECQ…QRIH), 276-298 (FECK…QRIH), 304-326 (YTCK…QRMH), 332-354 (YECK…QRVH), 360-382 (HECT…QRIH), and 388-410 (YKCN…QRRH).

The protein belongs to the krueppel C2H2-type zinc-finger protein family.

Its subcellular location is the nucleus. In terms of biological role, may be involved in transcriptional regulation. This Homo sapiens (Human) protein is Zinc finger protein 662 (ZNF662).